The primary structure comprises 261 residues: Zinc import ATP-binding protein ZnuC (261 aa).

Residues Ile-6–Asn-221 enclose the ABC transporter domain. Residue Gly-38–Thr-45 coordinates ATP.

It belongs to the ABC transporter superfamily. Zinc importer (TC 3.A.1.15.5) family. In terms of assembly, the complex is composed of two ATP-binding proteins (ZnuC), two transmembrane proteins (ZnuB) and a solute-binding protein (ZnuA).

The protein resides in the cell inner membrane. It catalyses the reaction Zn(2+)(out) + ATP(in) + H2O(in) = Zn(2+)(in) + ADP(in) + phosphate(in) + H(+)(in). Its function is as follows. Part of the ABC transporter complex ZnuABC involved in zinc import. Responsible for energy coupling to the transport system. This chain is Zinc import ATP-binding protein ZnuC, found in Pseudomonas fluorescens (strain ATCC BAA-477 / NRRL B-23932 / Pf-5).